A 397-amino-acid polypeptide reads, in one-letter code: 1-deoxy-D-xylulose 5-phosphate reductoisomerase (397 aa).

The NADPH site is built by Ser10, Gly11, Ser12, Ile13, Ala36, Arg37, and Asn124. Lys125 contacts 1-deoxy-D-xylulose 5-phosphate. Residue Glu126 participates in NADPH binding. Asp150 contributes to the Mn(2+) binding site. 1-deoxy-D-xylulose 5-phosphate is bound by residues Ser151, Glu152, Ser186, and His209. Glu152 lines the Mn(2+) pocket. NADPH is bound at residue Gly215. Residues Ser222, Asn227, Lys228, and Glu231 each coordinate 1-deoxy-D-xylulose 5-phosphate. Mn(2+) is bound at residue Glu231.

It belongs to the DXR family. Mg(2+) is required as a cofactor. It depends on Mn(2+) as a cofactor.

The enzyme catalyses 2-C-methyl-D-erythritol 4-phosphate + NADP(+) = 1-deoxy-D-xylulose 5-phosphate + NADPH + H(+). It functions in the pathway isoprenoid biosynthesis; isopentenyl diphosphate biosynthesis via DXP pathway; isopentenyl diphosphate from 1-deoxy-D-xylulose 5-phosphate: step 1/6. In terms of biological role, catalyzes the NADPH-dependent rearrangement and reduction of 1-deoxy-D-xylulose-5-phosphate (DXP) to 2-C-methyl-D-erythritol 4-phosphate (MEP). The protein is 1-deoxy-D-xylulose 5-phosphate reductoisomerase of Aeromonas hydrophila subsp. hydrophila (strain ATCC 7966 / DSM 30187 / BCRC 13018 / CCUG 14551 / JCM 1027 / KCTC 2358 / NCIMB 9240 / NCTC 8049).